The following is a 149-amino-acid chain: Large ribosomal subunit protein bL9 (149 aa).

The protein belongs to the bacterial ribosomal protein bL9 family.

Binds to the 23S rRNA. The polypeptide is Large ribosomal subunit protein bL9 (Sulfurihydrogenibium sp. (strain YO3AOP1)).